We begin with the raw amino-acid sequence, 1682 residues long: MKIIFFLCSFLFFIINTQCVTHESYQELVKKLEALEDAVLTGYSLFQKEKMVLKDGANTQVVAKPADAVSTQSAKNPPGATVPSGTASTKGAIRSPGAANPSDDSSDSDAKSYADLKHRVQNYLFTIKELKYPELFDLTNHMLTLCDNIHGFKYLIDGYEEINELLYKLNFYFDLLRAKLNDVCANDYCQIPFNLKIRANELDVLKKLVFGYRKPLDFIKDNVGKMEDYIKKNKTTIANINELIEGSKKTIDQNKNADNEEGKKKLYQAQYDLFIYNKQLQEAHNLISVLEKRIDTLKKNENIKKLLEDIDKIKIDAEKPTTGVNQILSLRLEKESRHEEKIKEIAKTIKFNIDRLFTDPLELEYYLREKNKKVDVTPKSQDPTKSVQIPKVPYPNGIVYPLPLTDIHNSLAADNDKNSYGDLMNPHTKEKINEKIITDNKERKIFINNIKKQIDLEEKNINHTKEQNKKLLEDYEKSKKDYEELLEKFYEMKFNNNFNKDVVDKIFSARYTYNVEKQRYNNKFSSSNNSVYNVQKLKKALSYLEDYSLRKGISEKDFNHYYTLKTGLEADIKKLTEEIKSSENKILEKNFKGLTHSANASLEVSDIVKLQVQKVLLIKKIEDLRKIELFLKNAQLKDSIHVPNIYKPQNKPEPYYLIVLKKEVDKLKEFIPKVKDMLKKEQAVLSSITQPLVAASETTEDGGHSTHTLSQSGETEVTEETEETVGHTTTVTITLPPKEVKVVENSIEHKSNDNSQALTKTVYLKKLDEFLTKSYICHKYILVSNSSMDQKLLEVYNLTPEENELKSCDRLDLLFNIQNNIPAMYSLYDSMNNDLQHLFFELYQKEMIYYLHKLKEENHIKKLLEEPKQITGTSSTSSPGNTTVNTAQSATHSNSQNQQSNASSTNTQNGVAVSSGPAVVEESHDPLTVLSISNDLKGIVSLLNLGNKTKVPNPLTISTTEMEKFYENILKIMIPIFNDDIKQFVKSNSKVITGLTETQKNALNDEIKKLKDTLQLSFDLYNKYKLKLDRLFNKKKELGQDKMQIKKLTLLKEQLESKLNSLNNPHNVLQNFSVFFNKKKEAEIAETENTLENTKILLKHYKGLVKYYNGESSPLKTLSEVSIQTEDNYANLEKFRVLSKIDGKLNDNLHLGKKKLSFLSSGLHHLITELKEVIKNKNYTGNSPSENNKKVNEALKSYENFLPEAKVTTVVTPPQPDVTPSPLSVRVSGSSGSTKEETQIPTSGSLLTELQQVVQLQNYDEEDDSLVVLPIFGESEDNDEYLDQVVTGEAISVTMDNILSGFENEYDVIYLKPLAGVYRSLKKQIEKNIFTFNLNLNDILNSRLKKRKYFLDVLESDLMQFKHISSNEYIIEDSFKLLNSEQKNTLLKSYKYIKESVENDIKFAQEGISYYEKVLAKYKDDLESIKKVIKEEKEFPSSPPTTPPSPAKTDEQKKESKFLPFLTNIETLYNNLVNKIDDYLINLKAKINDCNVEKDEAHVKITKLSDLKAIDDKIDLFKNPYDFEAIKKLINDDTKKDMLGKLLSTGLVQNFPNTIISKLIEGKFQDMLNISQHQCVKKQCPQNSGCFRHLDEREECKCLLNYKQEGDKCVENPNPTCNENNGGCDADAKCTEEDSGSNGKKITCECTKPDSYPLFDGIFCSSSNFLGISFLLILMLILYSFI.

The first 19 residues, Met-1–Cys-19, serve as a signal peptide directing secretion. Residues Ala-68–Ala-110 form a disordered region. Asn-233, Asn-462, Asn-528, and Asn-599 each carry an N-linked (GlcNAc...) asparagine glycan. Positions Ser-696–Thr-729 are disordered. N-linked (GlcNAc...) asparagine glycosylation is found at Asn-785, Asn-881, Asn-901, Asn-947, Asn-1071, and Asn-1178. The disordered stretch occupies residues Ile-870–Ala-918. Positions Thr-871–Asn-909 are enriched in low complexity. Disordered stretches follow at residues Thr-1212–Pro-1241 and Lys-1433–Lys-1453. Residues Val-1227–Pro-1241 are compositionally biased toward polar residues. The span at Ser-1437–Pro-1446 shows a compositional bias: pro residues. Asn-1569 carries N-linked (GlcNAc...) asparagine glycosylation. 2 consecutive EGF-like domains span residues His-1573–Pro-1613 and Asn-1614–Ser-1661. Cystine bridges form between Cys-1575-Cys-1586, Cys-1580-Cys-1596, Cys-1598-Cys-1609, Cys-1617-Cys-1630, Cys-1624-Cys-1644, and Cys-1646-Cys-1660. Residue Ser-1661 is the site of GPI-anchor amidated serine attachment. A propeptide spans Ser-1662–Ile-1682 (removed in mature form).

Forms a complex composed of subunits p83, p30, p38, and p42 which remain non-covalently associated; the complex is formed at the merozoite surface prior to egress from host erythrocytes. Forms a complex composed of processed MSP1 subunits, MSP6 subunit p36 and MSP7; the complex is formed at the merozoite surface prior to egress from host erythrocytes. Within the complex, interacts (via subunit p38) with MSP6 subunit p36 and (via subunits p83, p30 and p38) with MSP7 (via subunit p22). Forms a complex composed of MSP1, MSP6, DBLMSP1 and DBLMSP2. Within the complex, interacts (via subunit p38) with DBLMSP1 and DBLMSP2. Forms a complex composed of MSP1, and rhoptry proteins RhopH3, RAP1 and CLAG9/RhopH3. Within the complex, interacts (via subunits p42 and p19) with RhopH3 (via C-terminus). Forms a complex composed of MSP1, MSP6, MSP7, MSP9 and MSP3; within the complex, MSP6 and MSP9 mediate the binding to the host erythrocyte. Interacts (via subunits p19 and p42) with MSP9; the interaction is direct; MSP1 subunits p19 or p42, and MSP9 form a co-ligand complex that interacts with host SLC4A1/Band 3 protein. May interact with PFD6. Interacts with host spectrin. In terms of assembly, interacts with host glycophorin GYPA in a sialic acid-independent manner. As to quaternary structure, interacts with host proinflammatory cytokine S100P; the interaction blocks S100P inflammatory and chemotactic activities. Interacts with host SLC4A1/Band 3 (via 5ABC region) on the host erythrocyte surface in a sialic acid-independent manner. In terms of processing, the p190 precursor is cleaved by SUB1 prior to merozoite egress into 4 subunits p83, p30, p38, and p42 which remain non-covalently associated. SUB1-mediated proteolytic cleavage occurs in an orderly manner; the first cleavage occurs at the p30/p38 site, followed by cleavage at the p83/p30 site, the last cleavage occurs at the p38/p42 site. The order of cleavage is essential for parasite viability. SUB1-mediated processing is essential for merozoite egress. In a second processing step during erythrocyte invasion, p42 is cleaved by SUB2 into p33 and p19; the latter remains attached to the merozoite surface via its GPI-anchor and is endocytosed during the subsequent ring stage.

The protein resides in the cell membrane. Its subcellular location is the secreted. It localises to the vacuole membrane. Its function is as follows. During the asexual blood stage, involved in merozoite egress from host erythrocytes possibly via its interaction with the host cytoskeleton protein spectrin resulting in the destabilization of the host cytoskeleton and thus leading to erythrocyte cell membrane rupture. Involved in the binding to host erythrocytes and is required for host erythrocyte invasion. By binding to host proinflammatory cytokine S100P may interfere with host immune responses. Functionally, involved in merozoite invasion of host erythrocytes. May play a role in the biogenesis and/or function of the food vacuole during the intraerythrocytic development. This Plasmodium falciparum (isolate ro-33 / Ghana) protein is Merozoite surface protein 1.